The primary structure comprises 426 residues: 3-phosphoshikimate 1-carboxyvinyltransferase (426 aa).

Positions 22, 23, and 27 each coordinate 3-phosphoshikimate. Lys22 serves as a coordination point for phosphoenolpyruvate. The phosphoenolpyruvate site is built by Gly96 and Arg124. The 3-phosphoshikimate site is built by Ser170, Ser171, Gln172, Ser198, Asp314, Asn337, and Lys341. Gln172 is a binding site for phosphoenolpyruvate. Asp314 serves as the catalytic Proton acceptor. The phosphoenolpyruvate site is built by Arg345, Arg387, and Lys412.

It belongs to the EPSP synthase family. Monomer.

It localises to the cytoplasm. It catalyses the reaction 3-phosphoshikimate + phosphoenolpyruvate = 5-O-(1-carboxyvinyl)-3-phosphoshikimate + phosphate. It participates in metabolic intermediate biosynthesis; chorismate biosynthesis; chorismate from D-erythrose 4-phosphate and phosphoenolpyruvate: step 6/7. Functionally, catalyzes the transfer of the enolpyruvyl moiety of phosphoenolpyruvate (PEP) to the 5-hydroxyl of shikimate-3-phosphate (S3P) to produce enolpyruvyl shikimate-3-phosphate and inorganic phosphate. This is 3-phosphoshikimate 1-carboxyvinyltransferase from Shewanella oneidensis (strain ATCC 700550 / JCM 31522 / CIP 106686 / LMG 19005 / NCIMB 14063 / MR-1).